Reading from the N-terminus, the 887-residue chain is Phosphatidylinositol 3-kinase catalytic subunit type 3 (887 aa).

The C2 PI3K-type domain maps to 35-184 (YKAVLEDPML…LAKLTKAHRQ (150 aa)). The interval 149 to 170 (VEADGSEPTRTPGRTSSTLSED) is disordered. The span at 156–170 (PTRTPGRTSSTLSED) shows a compositional bias: polar residues. A Phosphothreonine; by AMPK modification is found at Thr-163. Ser-165 is modified (phosphoserine; by AMPK). Phosphoserine occurs at positions 244, 261, and 282. Residues 283–520 (DHDLKPNATT…PKTHEMYLNV (238 aa)) enclose the PIK helical domain. The interval 416–467 (EPTKKDSQASVSESLSSSGVSSADIDSSQIITNPLPPVASPPPASKSKEVSD) is disordered. Residues 423–444 (QASVSESLSSSGVSSADIDSSQ) are compositionally biased toward low complexity. Pro residues predominate over residues 449–459 (PLPPVASPPPA). Positions 605 to 871 (IPETATLFKS…LIDESVHALF (267 aa)) constitute a PI3K/PI4K catalytic domain. The segment at 611–617 (LFKSALM) is G-loop. Residues 740 to 748 (GVGDRHLDN) are catalytic loop. The interval 759 to 780 (HIDFGYILGRDPKPLPPPMKLN) is activation loop.

This sequence belongs to the PI3/PI4-kinase family. As to quaternary structure, component of the PI3K (PI3KC3/PI3K-III/class III phosphatidylinositol 3-kinase) complex the core of which is composed of the catalytic subunit PIK3C3, the regulatory subunit PIK3R4 and BECN1 associating with additional regulatory/auxiliary subunits to form alternative complex forms. Alternative complex forms containing a fourth regulatory subunit in a mutually exclusive manner are: the PI3K complex I (PI3KC3-C1) containing ATG14, and the PI3K complex II (PI3KC3-C2) containing UVRAG. PI3KC3-C1 displays a V-shaped architecture with PIK3R4 serving as a bridge between PIK3C3 and the ATG14:BECN1 subcomplex. Both, PI3KC3-C1 and PI3KC3-C2, can associate with further regulatory subunits such as RUBCN, SH3GLB1/Bif-1 and AMBRA1. PI3KC3-C1 probably associates with PIK3CB. Interacts with RAB7A in the presence of PIK3R4. Interacts with AMBRA1. Interacts with BECN1P1/BECN2. Interacts with SLAMF1. May interact with DYN2. May be a component of a complex composed of RAB5A (in GDP-bound form), DYN2 and PIK3C3. Interacts with NCKAP1L. Interacts with ATG14; this interaction is increased in the absence of TMEM39A. Interacts with STEEP1; the interaction is STING1-dependent and required for trafficking of STING1 from the endoplasmic reticulum. Interacts with YWHAG. Interacts with ARMC3. The cofactor is Mn(2+). Ubiquitinated via 'Lys-29'- and 'Lys-48'-linked ubiquitination by UBE3C, promoting its degradation. Deubiquitination by ZRANB1/TRABID promotes its stabilization, leading to autophagosome maturation.

It localises to the midbody. It is found in the late endosome. The protein localises to the cytoplasmic vesicle. The protein resides in the autophagosome. The catalysed reaction is a 1,2-diacyl-sn-glycero-3-phospho-(1D-myo-inositol) + ATP = a 1,2-diacyl-sn-glycero-3-phospho-(1D-myo-inositol-3-phosphate) + ADP + H(+). Its function is as follows. Catalytic subunit of the PI3K complex that mediates formation of phosphatidylinositol 3-phosphate; different complex forms are believed to play a role in multiple membrane trafficking pathways: PI3KC3-C1 is involved in initiation of autophagosomes and PI3KC3-C2 in maturation of autophagosomes and endocytosis. As part of PI3KC3-C1, promotes endoplasmic reticulum membrane curvature formation prior to vesicle budding. Involved in regulation of degradative endocytic trafficking and required for the abscission step in cytokinesis, probably in the context of PI3KC3-C2. Involved in the transport of lysosomal enzyme precursors to lysosomes. Required for transport from early to late endosomes. The sequence is that of Phosphatidylinositol 3-kinase catalytic subunit type 3 from Rattus norvegicus (Rat).